Here is a 389-residue protein sequence, read N- to C-terminus: Chalcone synthase (389 aa).

The active site involves C164.

This sequence belongs to the thiolase-like superfamily. Chalcone/stilbene synthases family.

It catalyses the reaction (E)-4-coumaroyl-CoA + 3 malonyl-CoA + 3 H(+) = 2',4,4',6'-tetrahydroxychalcone + 3 CO2 + 4 CoA. The protein operates within secondary metabolite biosynthesis; flavonoid biosynthesis. In terms of biological role, the primary product of this enzyme is 4,2',4',6'-tetrahydroxychalcone (also termed naringenin-chalcone or chalcone) which can under specific conditions spontaneously isomerize into naringenin. The protein is Chalcone synthase (CHS) of Catharanthus roseus (Madagascar periwinkle).